A 303-amino-acid polypeptide reads, in one-letter code: Putative AraC-like transcription regulator (303 aa).

One can recognise an HTH araC/xylS-type domain in the interval 202–300 (ASALTFLHRD…GMNPGDYRKH (99 aa)). 2 DNA-binding regions (H-T-H motif) span residues 219 to 240 (AELA…KATV) and 267 to 290 (LAAI…KRVL).

This Streptomyces antibioticus protein is Putative AraC-like transcription regulator.